The sequence spans 242 residues: Small ribosomal subunit protein uS2 (242 aa).

The protein belongs to the universal ribosomal protein uS2 family.

The protein is Small ribosomal subunit protein uS2 of Neisseria meningitidis serogroup C (strain 053442).